The sequence spans 860 residues: DNA mismatch repair protein MutS (860 aa).

621–628 (GPNMGGKS) provides a ligand contact to ATP.

Belongs to the DNA mismatch repair MutS family.

Its function is as follows. This protein is involved in the repair of mismatches in DNA. It is possible that it carries out the mismatch recognition step. This protein has a weak ATPase activity. The sequence is that of DNA mismatch repair protein MutS from Salmonella arizonae (strain ATCC BAA-731 / CDC346-86 / RSK2980).